An 826-amino-acid chain; its full sequence is Zinc phosphodiesterase ELAC protein 2 (826 aa).

The transit peptide at 1–16 (MWALCSLLRSAAGRTM) directs the protein to the mitochondrion. Over residues 15–24 (TMSQGRTISQ) the composition is skewed to polar residues. Disordered stretches follow at residues 15–51 (TMSQGRTISQAPARRERPRKDPLRHLRTREKRGPSGC) and 189–231 (QRRG…VSQR). The span at 27–38 (ARRERPRKDPLR) shows a compositional bias: basic and acidic residues. 6 positions are modified to phosphoserine: S199, S208, S212, S229, S618, and S736. A compositionally biased stretch (basic and acidic residues) spans 208-224 (SPERSSDSESNENEPHL). The segment at 798 to 826 (ELAGGLEDGEPQQKRAHTEEPQAKKVRAQ) is disordered. The span at 808–820 (PQQKRAHTEEPQA) shows a compositional bias: basic and acidic residues.

Belongs to the RNase Z family. As to quaternary structure, homodimer. Interacts with PTCD1. The cofactor is Zn(2+).

It localises to the mitochondrion. The protein resides in the mitochondrion matrix. Its subcellular location is the mitochondrion nucleoid. It is found in the nucleus. It catalyses the reaction Endonucleolytic cleavage of RNA, removing extra 3' nucleotides from tRNA precursor, generating 3' termini of tRNAs. A 3'-hydroxy group is left at the tRNA terminus and a 5'-phosphoryl group is left at the trailer molecule.. Its function is as follows. Zinc phosphodiesterase, which displays mitochondrial tRNA 3'-processing endonuclease activity. Involved in tRNA maturation, by removing a 3'-trailer from precursor tRNA. Associates with mitochondrial DNA complexes at the nucleoids to initiate RNA processing and ribosome assembly. The polypeptide is Zinc phosphodiesterase ELAC protein 2 (ELAC2) (Gorilla gorilla gorilla (Western lowland gorilla)).